The following is an 87-amino-acid chain: Small ribosomal subunit protein bS20 (87 aa).

The tract at residues 1–25 (MANSAQARKRARQNISHRNRNMSLR) is disordered. Residues 7–20 (ARKRARQNISHRNR) are compositionally biased toward basic residues.

Belongs to the bacterial ribosomal protein bS20 family.

In terms of biological role, binds directly to 16S ribosomal RNA. This is Small ribosomal subunit protein bS20 from Nitrosospira multiformis (strain ATCC 25196 / NCIMB 11849 / C 71).